The chain runs to 126 residues: Plastocyanin (126 aa).

An N-terminal signal peptide occupies residues 1 to 28; the sequence is MSKKFLTILAGLLLVVSSFFLSVSPAAA. One can recognise a Plastocyanin-like domain in the interval 29 to 126; that stretch reads ANATVKMGSD…AGMVGKVVVE (98 aa). Cu cation is bound by residues His67, Cys111, His114, and Met119.

The protein belongs to the plastocyanin family. Cu(2+) serves as cofactor.

The protein localises to the cellular thylakoid membrane. In terms of biological role, participates in electron transfer between P700 and the cytochrome b6-f complex in photosystem I. This chain is Plastocyanin (petE), found in Synechocystis sp. (strain ATCC 27184 / PCC 6803 / Kazusa).